We begin with the raw amino-acid sequence, 658 residues long: Pentatricopeptide repeat-containing protein At1g69290 (658 aa).

2 disordered regions span residues 1–23 (MFRK…ESPS) and 39–61 (TLSP…KSSF). Over residues 50 to 61 (PKTLTPDQKSSF) the composition is skewed to polar residues. 11 PPR repeats span residues 214–249 (DLVA…GVKP), 250–284 (DELS…GFAS), 285–320 (RRIL…GEES), 323–353 (SVET…AQKL), 361–395 (DSSV…GGGS), 397–431 (GIGV…GLQL), 432–466 (DVEI…RVVD), 467–497 (LKGS…VVED), 503–537 (NSHD…RYEP), 538–568 (NNQT…IKGK), and 581–615 (DHAL…KIFV).

This sequence belongs to the PPR family. P subfamily.

This is Pentatricopeptide repeat-containing protein At1g69290 from Arabidopsis thaliana (Mouse-ear cress).